The chain runs to 415 residues: Serine hydroxymethyltransferase (415 aa).

Residues L117 and 121 to 123 each bind (6S)-5,6,7,8-tetrahydrofolate; that span reads GHL. Position 226 is an N6-(pyridoxal phosphate)lysine (K226). (6S)-5,6,7,8-tetrahydrofolate is bound by residues E241 and 349 to 351; that span reads SPF.

Belongs to the SHMT family. In terms of assembly, homodimer. Requires pyridoxal 5'-phosphate as cofactor.

Its subcellular location is the cytoplasm. It catalyses the reaction (6R)-5,10-methylene-5,6,7,8-tetrahydrofolate + glycine + H2O = (6S)-5,6,7,8-tetrahydrofolate + L-serine. Its pathway is one-carbon metabolism; tetrahydrofolate interconversion. It participates in amino-acid biosynthesis; glycine biosynthesis; glycine from L-serine: step 1/1. Its function is as follows. Catalyzes the reversible interconversion of serine and glycine with tetrahydrofolate (THF) serving as the one-carbon carrier. This reaction serves as the major source of one-carbon groups required for the biosynthesis of purines, thymidylate, methionine, and other important biomolecules. Also exhibits THF-independent aldolase activity toward beta-hydroxyamino acids, producing glycine and aldehydes, via a retro-aldol mechanism. This is Serine hydroxymethyltransferase from Geobacter metallireducens (strain ATCC 53774 / DSM 7210 / GS-15).